A 1083-amino-acid polypeptide reads, in one-letter code: FACT complex subunit spt16 (1083 aa).

Residue Ser437 is modified to Phosphoserine. Residues 466 to 504 (LESKLRNEINTEEKRKEHQRELAQQLNERAKDRLARQGN) are a coiled coil. The segment at 923–1083 (FEQGGWTFLD…NGHKSKKSRH (161 aa)) is disordered. Acidic residues predominate over residues 935–987 (SGSEGENETAESEEDEAYNPTDAESDEESDEDSEYSEASEDSEESDEDLGSDE). Positions 988–1023 (ESGKDWSDLEREAAEEDRNHDYAADDKPRNGKFDSK) are enriched in basic and acidic residues. A compositionally biased stretch (basic residues) spans 1024-1033 (KHGKSSKHSP). The segment covering 1058–1076 (SSKDKDRKRSRDDSRDNGH) has biased composition (basic and acidic residues).

Belongs to the peptidase M24 family. SPT16 subfamily. As to quaternary structure, component of the FACT complex, a stable heterodimer of dre4/spt16 and Ssrp. Interacts with TRL/GAGA.

It is found in the nucleus. The protein localises to the chromosome. In terms of biological role, component of the FACT complex, a general chromatin factor that acts to reorganize nucleosomes. The FACT complex is involved in multiple processes that require DNA as a template such as mRNA elongation, DNA replication and DNA repair. During transcription elongation the FACT complex acts as a histone chaperone that both destabilizes and restores nucleosomal structure. It facilitates the passage of RNA polymerase II and transcription by promoting the dissociation of one histone H2A-H2B dimer from the nucleosome, then subsequently promotes the reestablishment of the nucleosome following the passage of RNA polymerase II. The FACT complex is required for expression of Hox genes. This Drosophila melanogaster (Fruit fly) protein is FACT complex subunit spt16 (dre4).